The sequence spans 220 residues: Catechol O-methyltransferase (220 aa).

S-adenosyl-L-methionine is bound by residues Val44, Glu66, 68–69 (GT), Ser74, Glu92, and Ala121. Position 139 (Asp139) interacts with a divalent metal cation. Asp141 lines the S-adenosyl-L-methionine pocket. 2 residues coordinate a divalent metal cation: Asp165 and Asn166.

Belongs to the class I-like SAM-binding methyltransferase superfamily. Cation-dependent O-methyltransferase family. As to quaternary structure, homodimer. A divalent metal cation serves as cofactor.

It catalyses the reaction a catechol + S-adenosyl-L-methionine = a guaiacol + S-adenosyl-L-homocysteine + H(+). Its activity is regulated as follows. Inhibited by EDTA. Functionally, catechol O-methyltransferase that can use various catechol-like compounds such as gallic acid (GA), 3,4-dihydroxy-5-methoxy-benzoic acid (5OMeBA), protocatechuic acid (PCA), 3,4-dihydroxy-benzaldehyde (DHA), dopamine, caffeic acid (CA), luteolin, quercetin, and 5-hydroxyuridine. This Mycobacterium tuberculosis (strain ATCC 25618 / H37Rv) protein is Catechol O-methyltransferase.